The sequence spans 251 residues: Leucine-rich repeat and calponin homology domain-containing protein 1 (251 aa).

The disordered stretch occupies residues 73–97; the sequence is SNGSEYSPNEIRANSPAISPTANST. Ser87 and Ser91 each carry phosphoserine. Residues 88–97 show a composition bias toward polar residues; it reads PAISPTANST. At Thr123 the chain carries Phosphothreonine. Positions 131-244 constitute a Calponin-homology (CH) domain; sequence MREEKELVEH…ITVQALLDVT (114 aa).

As to quaternary structure, interacts (via LRR repeats) with unphosphorylated DOCK8 (via DHR-2 domain); the interaction prevents the interaction between DOCK8 and CDC42.

It localises to the cytoplasm. Functionally, acts as a negative regulator of GTPase CDC42 by sequestering CDC42-guanine exchange factor DOCK8. Probably by preventing CDC42 activation, negatively regulates CD4(+) T-cell migration. The protein is Leucine-rich repeat and calponin homology domain-containing protein 1 of Felis catus (Cat).